Here is a 121-residue protein sequence, read N- to C-terminus: Large ribosomal subunit protein bL12 (121 aa).

The protein belongs to the bacterial ribosomal protein bL12 family. As to quaternary structure, homodimer. Part of the ribosomal stalk of the 50S ribosomal subunit. Forms a multimeric L10(L12)X complex, where L10 forms an elongated spine to which 2 to 4 L12 dimers bind in a sequential fashion. Binds GTP-bound translation factors.

Functionally, forms part of the ribosomal stalk which helps the ribosome interact with GTP-bound translation factors. Is thus essential for accurate translation. This Pseudomonas putida (strain GB-1) protein is Large ribosomal subunit protein bL12.